The chain runs to 527 residues: Lysine--tRNA ligase (527 aa).

A 'HIGH' region motif is present at residues 44–52 (PSGLPHIGT). The short motif at 290 to 294 (KISKS) is the 'KMSKS' region element. K293 contributes to the ATP binding site.

It belongs to the class-I aminoacyl-tRNA synthetase family.

It is found in the cytoplasm. The catalysed reaction is tRNA(Lys) + L-lysine + ATP = L-lysyl-tRNA(Lys) + AMP + diphosphate. This chain is Lysine--tRNA ligase, found in Roseobacter denitrificans (strain ATCC 33942 / OCh 114) (Erythrobacter sp. (strain OCh 114)).